We begin with the raw amino-acid sequence, 418 residues long: Vasopressin V1a receptor (418 aa).

Positions 1 to 15 (MRFSGSPSPGPSNSS) are enriched in low complexity. A disordered region spans residues 1-20 (MRFSGSPSPGPSNSSRWWPL). The Extracellular segment spans residues 1–51 (MRFSGSPSPGPSNSSRWWPLDAGDANTSGDLAGLGEDGGPQADTRNEELAK). Asparagine 13 and asparagine 26 each carry an N-linked (GlcNAc...) asparagine glycan. Residues 52 to 75 (LEIAVLAVIFVVAVLGNSSVLLAL) traverse the membrane as a helical segment. The Cytoplasmic portion of the chain corresponds to 76 to 87 (HRTPRKTSRMHL). Residues 88–109 (FIRHLSLADLAVAFFQVLPQLG) form a helical membrane-spanning segment. Residues 110 to 124 (WDITYRFRGPDGLCR) are Extracellular-facing. A disulfide bridge links cysteine 123 with cysteine 202. The chain crosses the membrane as a helical span at residues 125–146 (VVKHMQVFAMFASAYMLVVMTA). The Cytoplasmic segment spans residues 147–167 (DRYIAVCHPLKTLQQPARRSR). Residues 168–189 (LMIAAAWVLSFVLSTPQYFVFS) traverse the membrane as a helical segment. Residues 190–217 (MVEVSNVTKTYDCWANFIHPWGLPAYVT) lie on the Extracellular side of the membrane. A glycan (N-linked (GlcNAc...) asparagine) is linked at asparagine 195. The chain crosses the membrane as a helical span at residues 218–238 (WMTGSVFVAPVVILGTCYGFI). The Cytoplasmic segment spans residues 239 to 293 (CYHIWRKVRGKTAGRQGGPAEGAGESALYRGVLHARCVSSVKTISRAKIRTVKMT). The chain crosses the membrane as a helical span at residues 294–313 (FVIVTAYIVCWAPFFIIQMW). The Extracellular segment spans residues 314–331 (SAWDKNFSWVESENPATA). N-linked (GlcNAc...) asparagine glycosylation occurs at asparagine 319. The helical transmembrane segment at 332–351 (IPALLASLNSCCNPWIYMFF) threads the bilayer. The Cytoplasmic portion of the chain corresponds to 352-418 (SGHLLQDCAQ…KSIKFIPVST (67 aa)). Residues cysteine 365 and cysteine 366 are each lipidated (S-palmitoyl cysteine). The segment at 377 to 418 (GSDSMSRRQTSFTNNRSPTNSMGTWKDSPKSSKSIKFIPVST) is disordered. Residues 383 to 399 (RRQTSFTNNRSPTNSMG) show a composition bias toward polar residues. Serine 404 is modified (phosphoserine).

The protein belongs to the G-protein coupled receptor 1 family. Vasopressin/oxytocin receptor subfamily.

The protein resides in the cell membrane. Receptor for arginine vasopressin. The activity of this receptor is mediated by G proteins which activate a phosphatidyl-inositol-calcium second messenger system. The sequence is that of Vasopressin V1a receptor (AVPR1A) from Ovis aries (Sheep).